An 845-amino-acid chain; its full sequence is Protein P (845 aa).

Residues 1-179 (MPLSYQHFLK…FCGSPYSWEQ (179 aa)) form a terminal protein domain (TP) region. The tract at residues 180–348 (ELHHGRLVTK…YCLSHLVNLL (169 aa)) is spacer. Disordered stretches follow at residues 188-211 (TKTSQRHGDKSVCSQPSGILSRSS) and 288-317 (YSHLSTSKRQSSSGHKVEFPSFPPSSARSQ). 2 stretches are compositionally biased toward polar residues: residues 199–211 (VCSQPSGILSRSS) and 290–301 (HLSTSKRQSSSG). Positions 349-692 (EDWGPCTDHG…YMNLYPVARQ (344 aa)) are polymerase/reverse transcriptase domain (RT). The Reverse transcriptase domain occupies 359–602 (EHHIRIPRTP…YSLNFMGYII (244 aa)). Positions 431, 553, and 554 each coordinate Mg(2+).

This sequence belongs to the hepadnaviridae P protein family.

It carries out the reaction DNA(n) + a 2'-deoxyribonucleoside 5'-triphosphate = DNA(n+1) + diphosphate. It catalyses the reaction Endonucleolytic cleavage to 5'-phosphomonoester.. With respect to regulation, activated by host HSP70 and HSP40 in vitro to be able to bind the epsilon loop of the pgRNA. Because deletion of the RNase H region renders the protein partly chaperone-independent, the chaperones may be needed indirectly to relieve occlusion of the RNA-binding site by this domain. Inhibited by several reverse-transcriptase inhibitors: Lamivudine, Adefovir and Entecavir. Its function is as follows. Multifunctional enzyme that converts the viral RNA genome into dsDNA in viral cytoplasmic capsids. This enzyme displays a DNA polymerase activity that can copy either DNA or RNA templates, and a ribonuclease H (RNase H) activity that cleaves the RNA strand of RNA-DNA heteroduplexes in a partially processive 3'- to 5'-endonucleasic mode. Neo-synthesized pregenomic RNA (pgRNA) are encapsidated together with the P protein, and reverse-transcribed inside the nucleocapsid. Initiation of reverse-transcription occurs first by binding the epsilon loop on the pgRNA genome, and is initiated by protein priming, thereby the 5'-end of (-)DNA is covalently linked to P protein. Partial (+)DNA is synthesized from the (-)DNA template and generates the relaxed circular DNA (RC-DNA) genome. After budding and infection, the RC-DNA migrates in the nucleus, and is converted into a plasmid-like covalently closed circular DNA (cccDNA). The activity of P protein does not seem to be necessary for cccDNA generation, and is presumably released from (+)DNA by host nuclear DNA repair machinery. The chain is Protein P from Homo sapiens (Human).